Consider the following 1849-residue polypeptide: Brefeldin A-inhibited guanine nucleotide-exchange protein 1 (1849 aa).

The DCB; DCB:DCB and DCB:HUS domain interaction stretch occupies residues tyrosine 2–arginine 224. Residues alanine 46–alanine 58 are compositionally biased toward basic and acidic residues. Disordered stretches follow at residues alanine 46 to leucine 65, glutamate 216 to alanine 301, and isoleucine 350 to alanine 413. Residues serine 52, serine 286, serine 289, and serine 290 each carry the phosphoserine modification. Polar residues-rich tracts occupy residues isoleucine 350–threonine 360 and serine 394–proline 409. Residues serine 397 and serine 410 each carry the phosphoserine modification. The segment at alanine 557–asparagine 577 is HUS; DCB:HUS domain interaction. Residues proline 634–aspartate 687 form a disordered region. Positions lysine 644–threonine 658 are enriched in basic and acidic residues. Positions serine 664–serine 684 are enriched in low complexity. Residues phenylalanine 709–serine 840 enclose the SEC7 domain. The Nuclear localization signal (NLS) signature appears at lysine 711–arginine 715. Phosphoserine is present on residues serine 1079, serine 1566, and serine 1569.

As to quaternary structure, homodimer. Interacts with ARFGEF2/BIG2; both proteins are probably part of the same or very similar macromolecular complexes. Interacts with FKBP2. Interacts with MYO9B. Interacts with PRKAR1A and PRKAR2A. Interacts with PPP1CC. Interacts with NCL, FBL, NUP62 and U3 small nucleolar RNA. Interacts with DPY30. Interacts with PDE3A. Interacts with KANK1. Interacts with TBC1D22A and TBC1D22B. Phosphorylated. In vitro phosphorylated by PKA reducing its GEF activity and dephosphorylated by phosphatase PP1. Abundantly expressed in kidney, somewhat less abundant in lung, spleen, and brain, and still less abundant in heart.

Its subcellular location is the cytoplasm. The protein localises to the perinuclear region. The protein resides in the golgi apparatus. It is found in the trans-Golgi network. It localises to the nucleus. Its subcellular location is the nucleolus. The protein localises to the nucleus matrix. The protein resides in the membrane. Inhibited by brefeldin A. Functionally, promotes guanine-nucleotide exchange on ARF1 and ARF3. Promotes the activation of ARF1/ARF3 through replacement of GDP with GTP. Involved in vesicular trafficking. Required for the maintenance of Golgi structure; the function may be independent of its GEF activity. Required for the maturation of integrin beta-1 in the Golgi. Involved in the establishment and persistence of cell polarity during directed cell movement in wound healing. Proposed to act as A kinase-anchoring protein (AKAP) and may mediate crosstalk between Arf and PKA pathways. Inhibits GAP activity of MYO9B probably through competitive RhoA binding. The function in the nucleus remains to be determined. The sequence is that of Brefeldin A-inhibited guanine nucleotide-exchange protein 1 (ARFGEF1) from Bos taurus (Bovine).